A 310-amino-acid polypeptide reads, in one-letter code: MNKDNTLHVDTIMKITMFSEVSVGILANSILFFAHLCMLLGENKPKPIHLYIASLSLTQLMLLITMGLIAADMFISQGIWDSTSCQSLIYLHRLSRGFTLSAACLLNVFWMITLSSKKSRLTKFKHNSPHHISGAFLLLCVLYMCFSSHLILSIIATPNLTSDNFMYVTKSCSFLPMCYSRTSMFSTTIAVREAFFIGLMALSSGYLVAFLWRHRKQAQHLHSTGLSSKASPEQRATETILLLMSFFVVLYILENVVFYSRMKFKDGSTFYCVQIIVSHSYATVSSFVFIFTEKRMTKILRSVCTRIINI.

Residues 1 to 20 (MNKDNTLHVDTIMKITMFSE) lie on the Extracellular side of the membrane. The chain crosses the membrane as a helical span at residues 21-41 (VSVGILANSILFFAHLCMLLG). Topologically, residues 42–59 (ENKPKPIHLYIASLSLTQ) are cytoplasmic. Residues 60 to 80 (LMLLITMGLIAADMFISQGIW) form a helical membrane-spanning segment. At 81–93 (DSTSCQSLIYLHR) the chain is on the extracellular side. Cysteines 85 and 172 form a disulfide. A helical transmembrane segment spans residues 94-114 (LSRGFTLSAACLLNVFWMITL). At 115–134 (SSKKSRLTKFKHNSPHHISG) the chain is on the cytoplasmic side. Residues 135 to 155 (AFLLLCVLYMCFSSHLILSII) form a helical membrane-spanning segment. Residues 156 to 193 (ATPNLTSDNFMYVTKSCSFLPMCYSRTSMFSTTIAVRE) lie on the Extracellular side of the membrane. N-linked (GlcNAc...) asparagine glycosylation occurs at Asn159. The chain crosses the membrane as a helical span at residues 194–214 (AFFIGLMALSSGYLVAFLWRH). Residues 215 to 238 (RKQAQHLHSTGLSSKASPEQRATE) are Cytoplasmic-facing. Residues 239–259 (TILLLMSFFVVLYILENVVFY) traverse the membrane as a helical segment. The Extracellular segment spans residues 260–269 (SRMKFKDGST). Residues 270-290 (FYCVQIIVSHSYATVSSFVFI) form a helical membrane-spanning segment. The Cytoplasmic portion of the chain corresponds to 291 to 310 (FTEKRMTKILRSVCTRIINI).

The protein belongs to the G-protein coupled receptor 1 family. In terms of tissue distribution, expressed in 1-4% of neurons of the vomeronasal organ. Only one pheromone receptor gene may be expressed in a particular neuron. Not expressed in the main olfactory epithelium.

Its subcellular location is the cell membrane. Putative pheromone receptor implicated in the regulation of social as well as reproductive behavior. The sequence is that of Vomeronasal type-1 receptor 93 (Vom1r93) from Rattus norvegicus (Rat).